The primary structure comprises 126 residues: Ribosome-binding factor A (126 aa).

It belongs to the RbfA family. In terms of assembly, monomer. Binds 30S ribosomal subunits, but not 50S ribosomal subunits or 70S ribosomes.

It localises to the cytoplasm. In terms of biological role, one of several proteins that assist in the late maturation steps of the functional core of the 30S ribosomal subunit. Associates with free 30S ribosomal subunits (but not with 30S subunits that are part of 70S ribosomes or polysomes). Required for efficient processing of 16S rRNA. May interact with the 5'-terminal helix region of 16S rRNA. The chain is Ribosome-binding factor A from Geobacillus sp. (strain WCH70).